A 105-amino-acid chain; its full sequence is Nucleoid-associated protein MW0434 (105 aa).

The segment at 1 to 33 (MRGGGNMQQMMKQMQKMQKKMAQEQEKLKEERI) is disordered. Over residues 7-16 (MQQMMKQMQK) the composition is skewed to low complexity. Residues 21–33 (MAQEQEKLKEERI) are compositionally biased toward basic and acidic residues.

It belongs to the YbaB/EbfC family. Homodimer.

The protein resides in the cytoplasm. Its subcellular location is the nucleoid. In terms of biological role, binds to DNA and alters its conformation. May be involved in regulation of gene expression, nucleoid organization and DNA protection. This is Nucleoid-associated protein MW0434 from Staphylococcus aureus (strain MW2).